The primary structure comprises 570 residues: Eukaryotic translation initiation factor 2A (570 aa).

WD repeat units lie at residues 274-316 (EKKG…FDTI) and 318-358 (GPRN…EIIS). Residues 468 to 526 (PPHLRKPLGGGGSAGPPSAAAPTPGNQNQRPAQPRANGNGNAPQPFRPQQSEQERKAFQ) are disordered. Over residues 482–492 (GPPSAAAPTPG) the composition is skewed to low complexity. A compositionally biased stretch (polar residues) spans 493–518 (NQNQRPAQPRANGNGNAPQPFRPQQS). Positions 519 to 541 (EQERKAFQLKKKVEEIKVLKQRV) form a coiled coil.

This sequence belongs to the WD repeat EIF2A family.

Its function is as follows. Functions in the early steps of protein synthesis of a small number of specific mRNAs. Acts by directing the binding of methionyl-tRNAi to 40S ribosomal subunits. In contrast to the eIF-2 complex, it binds methionyl-tRNAi to 40S subunits in a codon-dependent manner, whereas the eIF-2 complex binds methionyl-tRNAi to 40S subunits in a GTP-dependent manner. This chain is Eukaryotic translation initiation factor 2A, found in Caenorhabditis elegans.